A 295-amino-acid polypeptide reads, in one-letter code: Fructose-bisphosphate aldolase class 1 (295 aa).

Glutamate 176 functions as the Proton acceptor in the catalytic mechanism. Lysine 213 (schiff-base intermediate with dihydroxyacetone-P) is an active-site residue.

It belongs to the class I fructose-bisphosphate aldolase family.

It catalyses the reaction beta-D-fructose 1,6-bisphosphate = D-glyceraldehyde 3-phosphate + dihydroxyacetone phosphate. The protein operates within carbohydrate degradation; glycolysis; D-glyceraldehyde 3-phosphate and glycerone phosphate from D-glucose: step 4/4. The sequence is that of Fructose-bisphosphate aldolase class 1 from Clostridium beijerinckii (strain ATCC 51743 / NCIMB 8052) (Clostridium acetobutylicum).